Here is a 2969-residue protein sequence, read N- to C-terminus: Histone-lysine N-methyltransferase ASH1L (2969 aa).

Disordered regions lie at residues 1–70 and 118–143; these read MDPR…TDAQ and HPRK…RDPS. Positions 21-31 are enriched in polar residues; it reads KSPSAISTGTL. S22 carries the phosphoserine modification. Composition is skewed to basic and acidic residues over residues 33-65 and 127-143; these read SKRE…KDDG and KMTD…RDPS. Residue K34 forms a Glycyl lysine isopeptide (Lys-Gly) (interchain with G-Cter in SUMO2) linkage. An N6-acetyllysine modification is found at K375. K425 participates in a covalent cross-link: Glycyl lysine isopeptide (Lys-Gly) (interchain with G-Cter in SUMO2). The segment covering 501-511 has biased composition (polar residues); the sequence is IQQDSFSSSEK. 7 disordered regions span residues 501 to 525, 537 to 583, 824 to 845, 878 to 966, 1100 to 1128, 1151 to 1231, and 1243 to 1281; these read IQQD…QPPV, ASDV…PNPL, YKPK…PPKR, KQGL…EMEP, SEIL…AGFV, MKKA…EHVS, and SLKE…QLRN. Over residues 512–522 the composition is skewed to basic and acidic residues; it reads GSYETSKHEKQ. The span at 554 to 579 shows a compositional bias: polar residues; that stretch reads NLPSPSPTVSVNPLTRSPPETSSQLA. Positions 887–897 are enriched in basic residues; it reads PKKRGRPKRQM. A DNA-binding region (a.T hook 1) is located at residues 887 to 899; that stretch reads PKKRGRPKRQMRS. Residues 920-932 are compositionally biased toward basic and acidic residues; that stretch reads SKLESESDNHRSS. Positions 936–949 are enriched in acidic residues; sequence FESEDQLQDPDDLD. Low complexity-rich tracts occupy residues 1100–1123 and 1162–1175; these read SEIL…PVSS and SPPT…SHLS. S1162 and S1170 each carry phosphoserine. A compositionally biased stretch (polar residues) spans 1186-1211; sequence SPISESHSDETIPSDSGIGTDNNSTS. Q1220 carries the N5-methylglutamine modification. Composition is skewed to basic residues over residues 1246 to 1256 and 1266 to 1277; these read EKHKHKCKRRN and KRQKRKRKKKYP. The a.T hook 2 DNA-binding region spans 1347–1359; the sequence is KKKRGRPPKMREA. Disordered regions lie at residues 1489–1508, 1580–1711, and 1741–1761; these read HREH…GSSR, SESS…ASGD, and ASAP…TLGK. Composition is skewed to polar residues over residues 1496–1508, 1580–1598, 1605–1622, and 1650–1680; these read EQPQ…GSSR, SESS…SEPA, NLFT…PNSS, and LPSN…STNC. The segment covering 1741–1751 has biased composition (low complexity); sequence ASAPPSSSPGR. The segment at residues 1847–1859 is a DNA-binding region (a.T hook 3); that stretch reads KRRPGRPRKCPLQ. Residues 1911–1991 form a disordered region; the sequence is KKGLKRKGWL…PRPPKKKYQK (81 aa). A catalytic domain region spans residues 2069 to 2288; that stretch reads PDVPLYKKIR…KCRGIIGGKS (220 aa). Positions 2091 to 2142 constitute an AWS domain; it reads YEATTCNCKKPDDDTRKGCVDDCLNRMIFAECSPNTCPCGEQCCNQRIQRHE. One can recognise an SET domain in the interval 2145-2261; it reads QCLERFRAEE…AGTELTYDYN (117 aa). In terms of domain architecture, Post-SET spans 2269–2285; the sequence is KQQLCKCGFEKCRGIIG. The segment at 2288-2346 is disordered; that stretch reads SQRVNGLTSSKNSQPMATHKKSGRSKEKRKSKHKLKKRRGHLSEEPSENINTPTRLTPQ. Polar residues predominate over residues 2289–2303; it reads QRVNGLTSSKNSQPM. Residues 2305-2327 are compositionally biased toward basic residues; sequence THKKSGRSKEKRKSKHKLKKRRG. Residues K2317, K2319, and K2323 each carry the N6-acetyllysine modification. A compositionally biased stretch (polar residues) spans 2335–2346; it reads ENINTPTRLTPQ. One can recognise a Bromo domain in the interval 2444-2550; sequence RLAQIFKEIC…KAYYNARHEA (107 aa). Residues 2585–2631 form a PHD-type zinc finger; sequence VIRCICGLYKDEGLMIQCDKCMVWQHCDCMGVNSDVEHYLCEQCDPR. One can recognise a BAH domain in the interval 2661 to 2798; sequence LLLRQGDCVY…KSAHLFYKIH (138 aa). Disordered regions lie at residues 2825 to 2856 and 2876 to 2919; these read SPHY…DLGQ and NEIP…RRHN. Positions 2842 to 2855 are enriched in basic and acidic residues; it reads WKSERSKPPLKDLG.

The protein belongs to the class V-like SAM-binding methyltransferase superfamily. Histone-lysine methyltransferase family. SET2 subfamily. Methylated at Gln-1220 by N6AMT1. In terms of tissue distribution, widely expressed, with highest level in brain, heart and kidney.

It is found in the nucleus. Its subcellular location is the cell junction. It localises to the tight junction. The protein localises to the chromosome. It carries out the reaction L-lysyl(36)-[histone H3] + 3 S-adenosyl-L-methionine = N(6),N(6),N(6)-trimethyl-L-lysyl(36)-[histone H3] + 3 S-adenosyl-L-homocysteine + 3 H(+). The enzyme catalyses L-lysyl(9)-[histone H3] + S-adenosyl-L-methionine = N(6)-methyl-L-lysyl(9)-[histone H3] + S-adenosyl-L-homocysteine + H(+). Its function is as follows. Histone methyltransferase specifically trimethylating 'Lys-36' of histone H3 forming H3K36me3. Also monomethylates 'Lys-9' of histone H3 (H3K9me1) in vitro. The physiological significance of the H3K9me1 activity is unclear. The polypeptide is Histone-lysine N-methyltransferase ASH1L (ASH1L) (Homo sapiens (Human)).